Here is a 347-residue protein sequence, read N- to C-terminus: Gene 34 protein (347 aa).

Residues 95-126 (GKGGEAGQRAGEDDERMDEGVPEEGAPRSPHP) form a disordered region. Acidic residues predominate over residues 106-116 (EDDERMDEGVP).

The protein belongs to the herpesviridae UL95 family.

This Equus caballus (Horse) protein is Gene 34 protein (34).